A 406-amino-acid polypeptide reads, in one-letter code: N-acetylmuramoyl-L-alanine amidase CwlM (406 aa).

2 peptidoglycan-binding domain regions span residues 18–83 (SAAV…YRAL) and 105–160 (GDDV…LRSL). The region spanning 193 to 370 (IIIDPGRGGV…IAEGILAAVK (178 aa)) is the MurNAc-LAA domain.

It belongs to the N-acetylmuramoyl-L-alanine amidase 3 family.

The protein resides in the periplasm. It catalyses the reaction Hydrolyzes the link between N-acetylmuramoyl residues and L-amino acid residues in certain cell-wall glycopeptides.. Its pathway is cell wall degradation; peptidoglycan degradation. Cell-wall hydrolase that hydrolyzes the amide bond between N-acetylmuramic acid and L-alanine in cell-wall glycopeptides. Is able to lyse whole mycobacteria, release peptidoglycan from the cell wall of M.luteus and M.smegmatis, and cleave N-acetylmuramoyl-L-alanyl-D-isoglutamine, releasing free N-acetylmuramic acid and dipeptide. This is N-acetylmuramoyl-L-alanine amidase CwlM from Mycobacterium tuberculosis (strain ATCC 25618 / H37Rv).